Reading from the N-terminus, the 226-residue chain is Small ribosomal subunit protein uS2c (226 aa).

This sequence belongs to the universal ribosomal protein uS2 family.

The protein localises to the plastid. It is found in the chloroplast. The protein is Small ribosomal subunit protein uS2c (rps2) of Phaeodactylum tricornutum (strain CCAP 1055/1).